The following is a 323-amino-acid chain: Aldo-keto reductase family 1 member C1 (323 aa).

Residues 20–24 (GFGTY) and Asp50 contribute to the NADP(+) site. Substrate is bound at residue Tyr24. Catalysis depends on Tyr55, which acts as the Proton donor. His117 provides a ligand contact to substrate. NADP(+) is bound by residues 166 to 167 (SN), Gln190, and 216 to 222 (YSALGSH). Residues His222 and Trp227 each coordinate substrate. An NADP(+)-binding site is contributed by 270-280 (KSYNEQRIRQN).

The protein belongs to the aldo/keto reductase family. As to quaternary structure, monomer.

The protein resides in the cytoplasm. Its subcellular location is the cytosol. It carries out the reaction a 3alpha-hydroxysteroid + NADP(+) = a 3-oxosteroid + NADPH + H(+). The catalysed reaction is a 3alpha-hydroxysteroid + NAD(+) = a 3-oxosteroid + NADH + H(+). It catalyses the reaction (17R,20S)-17,20-dihydroxypregn-4-en-3-one + NADP(+) = 17alpha-hydroxyprogesterone + NADPH + H(+). The enzyme catalyses (17R,20S)-17,20-dihydroxypregn-4-en-3-one + NAD(+) = 17alpha-hydroxyprogesterone + NADH + H(+). It carries out the reaction (20S)-hydroxypregn-4-en-3-one + NADP(+) = progesterone + NADPH + H(+). The catalysed reaction is (20S)-hydroxypregn-4-en-3-one + NAD(+) = progesterone + NADH + H(+). It catalyses the reaction (1R,2R)-1,2-dihydrobenzene-1,2-diol + NADP(+) = catechol + NADPH + H(+). The enzyme catalyses (S)-indan-1-ol + NAD(+) = indan-1-one + NADH + H(+). It carries out the reaction (S)-indan-1-ol + NADP(+) = indan-1-one + NADPH + H(+). The catalysed reaction is 5alpha-androstane-3alpha,17beta-diol + NADP(+) = 17beta-hydroxy-5alpha-androstan-3-one + NADPH + H(+). It catalyses the reaction 5alpha-androstane-3beta,17beta-diol + NADP(+) = 17beta-hydroxy-5alpha-androstan-3-one + NADPH + H(+). The enzyme catalyses 5alpha-androstane-3alpha,17beta-diol + NAD(+) = 17beta-hydroxy-5alpha-androstan-3-one + NADH + H(+). It carries out the reaction 17beta-hydroxy-5alpha-androstan-3-one + NADP(+) = 5alpha-androstan-3,17-dione + NADPH + H(+). The catalysed reaction is androsterone + NADP(+) = 5alpha-androstan-3,17-dione + NADPH + H(+). It catalyses the reaction androsterone + NADPH + H(+) = 5alpha-androstane-3alpha,17beta-diol + NADP(+). The enzyme catalyses 5alpha-androstane-3alpha,17beta-diol + NAD(+) = androsterone + NADH + H(+). It carries out the reaction 17beta-estradiol + NADP(+) = estrone + NADPH + H(+). The catalysed reaction is 17beta-estradiol + NAD(+) = estrone + NADH + H(+). It catalyses the reaction testosterone + NADP(+) = androst-4-ene-3,17-dione + NADPH + H(+). The enzyme catalyses 20alpha-hydroxy-5beta-pregnan-3-one + NADP(+) = 5beta-pregnan-3,20-dione + NADPH + H(+). It carries out the reaction 3beta-hydroxy-5beta-pregnane-20-one + NADP(+) = 5beta-pregnan-3,20-dione + NADPH + H(+). The catalysed reaction is 3beta-hydroxy-5beta-pregnane-20-one + NADPH + H(+) = 3beta,20alpha-dihydroxy-5beta-pregnane + NADP(+). It catalyses the reaction (3beta,5alpha,17beta)-3-hydroxyandrostan-17-yl sulfate + NADP(+) = 5alpha-dihydrotestosterone sulfate + NADPH + H(+). It functions in the pathway steroid metabolism. Cytosolic aldo-keto reductase that catalyzes the NADH and NADPH-dependent reduction of ketosteroids to hydroxysteroids. Most probably acts as a reductase in vivo since the oxidase activity measured in vitro is inhibited by physiological concentrations of NADPH. Displays a broad positional specificity acting on positions 3, 17 and 20 of steroids and regulates the metabolism of hormones like estrogens and androgens. May also reduce conjugated steroids such as 5alpha-dihydrotestosterone sulfate. Displays affinity for bile acids. The protein is Aldo-keto reductase family 1 member C1 (AKR1C1) of Pongo abelii (Sumatran orangutan).